The following is a 161-amino-acid chain: Nucleotide-binding protein Shal_3198 (161 aa).

This sequence belongs to the YajQ family.

In terms of biological role, nucleotide-binding protein. This Shewanella halifaxensis (strain HAW-EB4) protein is Nucleotide-binding protein Shal_3198.